A 238-amino-acid chain; its full sequence is Pyridoxine 5'-phosphate synthase (238 aa).

N7 serves as a coordination point for 3-amino-2-oxopropyl phosphate. 1-deoxy-D-xylulose 5-phosphate is bound at residue 9–10 (DH). R18 serves as a coordination point for 3-amino-2-oxopropyl phosphate. Residue H43 is the Proton acceptor of the active site. The 1-deoxy-D-xylulose 5-phosphate site is built by R45 and H50. E70 serves as the catalytic Proton acceptor. T100 provides a ligand contact to 1-deoxy-D-xylulose 5-phosphate. H190 acts as the Proton donor in catalysis. Residues G191 and 212–213 (GH) contribute to the 3-amino-2-oxopropyl phosphate site.

This sequence belongs to the PNP synthase family. In terms of assembly, homooctamer; tetramer of dimers.

The protein resides in the cytoplasm. It catalyses the reaction 3-amino-2-oxopropyl phosphate + 1-deoxy-D-xylulose 5-phosphate = pyridoxine 5'-phosphate + phosphate + 2 H2O + H(+). It functions in the pathway cofactor biosynthesis; pyridoxine 5'-phosphate biosynthesis; pyridoxine 5'-phosphate from D-erythrose 4-phosphate: step 5/5. Catalyzes the complicated ring closure reaction between the two acyclic compounds 1-deoxy-D-xylulose-5-phosphate (DXP) and 3-amino-2-oxopropyl phosphate (1-amino-acetone-3-phosphate or AAP) to form pyridoxine 5'-phosphate (PNP) and inorganic phosphate. The sequence is that of Pyridoxine 5'-phosphate synthase from Prochlorococcus marinus (strain MIT 9312).